Here is a 344-residue protein sequence, read N- to C-terminus: MRIELLNTPPDASETRIEEQIRPLRMDAFAGQQRLTDNLRVFISAAKMRGEALDHVLLSGPPGLGKTTLAYIIASEMGSSIKSTSGPLLDKAGNLAGLLTGLQKGDVLFIDEIHRMPPTVEEYLYSAMEDFRIDIMLDSGPSARAVQLRIEPFTLVGATTRSGLLTSPLRARFGINSRFDYYAPELLEGIIRRASTILGIGIDAEAASEIAGRSRGTPRIANRLLRRARDFAQVDGESFISRSIAMKTLDCLEIDEEGLDDMDKKIMETIVNKFNGGPVGIASLAVSVGEEQDTIEEVYEPYLIQAGYLTRTTRGRVATRQALIRFSTASERDEISLFDAQPTS.

Residues 1–182 (MRIELLNTPP…FGINSRFDYY (182 aa)) are large ATPase domain (RuvB-L). ATP-binding positions include Ile-21, Arg-22, Gly-63, Lys-66, Thr-67, Thr-68, 129–131 (EDF), Arg-172, Tyr-182, and Arg-219. Thr-67 is a binding site for Mg(2+). Positions 183-253 (APELLEGIIR…IAMKTLDCLE (71 aa)) are small ATPAse domain (RuvB-S). Positions 256-344 (EEGLDDMDKK…ISLFDAQPTS (89 aa)) are head domain (RuvB-H). DNA contacts are provided by Arg-311 and Arg-316.

This sequence belongs to the RuvB family. As to quaternary structure, homohexamer. Forms an RuvA(8)-RuvB(12)-Holliday junction (HJ) complex. HJ DNA is sandwiched between 2 RuvA tetramers; dsDNA enters through RuvA and exits via RuvB. An RuvB hexamer assembles on each DNA strand where it exits the tetramer. Each RuvB hexamer is contacted by two RuvA subunits (via domain III) on 2 adjacent RuvB subunits; this complex drives branch migration. In the full resolvosome a probable DNA-RuvA(4)-RuvB(12)-RuvC(2) complex forms which resolves the HJ.

The protein localises to the cytoplasm. It catalyses the reaction ATP + H2O = ADP + phosphate + H(+). Functionally, the RuvA-RuvB-RuvC complex processes Holliday junction (HJ) DNA during genetic recombination and DNA repair, while the RuvA-RuvB complex plays an important role in the rescue of blocked DNA replication forks via replication fork reversal (RFR). RuvA specifically binds to HJ cruciform DNA, conferring on it an open structure. The RuvB hexamer acts as an ATP-dependent pump, pulling dsDNA into and through the RuvAB complex. RuvB forms 2 homohexamers on either side of HJ DNA bound by 1 or 2 RuvA tetramers; 4 subunits per hexamer contact DNA at a time. Coordinated motions by a converter formed by DNA-disengaged RuvB subunits stimulates ATP hydrolysis and nucleotide exchange. Immobilization of the converter enables RuvB to convert the ATP-contained energy into a lever motion, pulling 2 nucleotides of DNA out of the RuvA tetramer per ATP hydrolyzed, thus driving DNA branch migration. The RuvB motors rotate together with the DNA substrate, which together with the progressing nucleotide cycle form the mechanistic basis for DNA recombination by continuous HJ branch migration. Branch migration allows RuvC to scan DNA until it finds its consensus sequence, where it cleaves and resolves cruciform DNA. The chain is Holliday junction branch migration complex subunit RuvB from Pelodictyon phaeoclathratiforme (strain DSM 5477 / BU-1).